Here is a 145-residue protein sequence, read N- to C-terminus: 3-dehydroquinate dehydratase (145 aa).

Residue Y23 is the Proton acceptor of the active site. Positions 75, 81, and 88 each coordinate substrate. H101 acts as the Proton donor in catalysis. Substrate is bound by residues 102 to 103 (LS) and R112.

Belongs to the type-II 3-dehydroquinase family. As to quaternary structure, homododecamer.

It carries out the reaction 3-dehydroquinate = 3-dehydroshikimate + H2O. It participates in metabolic intermediate biosynthesis; chorismate biosynthesis; chorismate from D-erythrose 4-phosphate and phosphoenolpyruvate: step 3/7. Its function is as follows. Catalyzes a trans-dehydration via an enolate intermediate. The chain is 3-dehydroquinate dehydratase from Legionella pneumophila (strain Lens).